The following is a 218-amino-acid chain: 3,4-dihydroxy-2-butanone 4-phosphate synthase (218 aa).

D-ribulose 5-phosphate is bound by residues 38–39, Asp43, 151–155, and Glu175; these read RE and RRGHT. Residue Glu39 coordinates Mg(2+). His154 is a binding site for Mg(2+).

The protein belongs to the DHBP synthase family. In terms of assembly, homodimer. Mg(2+) is required as a cofactor. Mn(2+) serves as cofactor.

The catalysed reaction is D-ribulose 5-phosphate = (2S)-2-hydroxy-3-oxobutyl phosphate + formate + H(+). The protein operates within cofactor biosynthesis; riboflavin biosynthesis; 2-hydroxy-3-oxobutyl phosphate from D-ribulose 5-phosphate: step 1/1. Functionally, catalyzes the conversion of D-ribulose 5-phosphate to formate and 3,4-dihydroxy-2-butanone 4-phosphate. The chain is 3,4-dihydroxy-2-butanone 4-phosphate synthase from Vibrio vulnificus (strain CMCP6).